Here is a 233-residue protein sequence, read N- to C-terminus: 7-cyano-7-deazaguanine synthase (233 aa).

7 to 17 is a binding site for ATP; it reads CSGGLDSVSLA. 4 residues coordinate Zn(2+): cysteine 185, cysteine 193, cysteine 196, and cysteine 199.

It belongs to the QueC family. Zn(2+) serves as cofactor.

It catalyses the reaction 7-carboxy-7-deazaguanine + NH4(+) + ATP = 7-cyano-7-deazaguanine + ADP + phosphate + H2O + H(+). It participates in purine metabolism; 7-cyano-7-deazaguanine biosynthesis. Its function is as follows. Catalyzes the ATP-dependent conversion of 7-carboxy-7-deazaguanine (CDG) to 7-cyano-7-deazaguanine (preQ(0)). The chain is 7-cyano-7-deazaguanine synthase from Ruegeria sp. (strain TM1040) (Silicibacter sp.).